Consider the following 472-residue polypeptide: Adenosylhomocysteinase (472 aa).

Substrate is bound by residues threonine 63, aspartate 138, and glutamate 198. 199-201 (TTT) is a binding site for NAD(+). Residues lysine 228 and aspartate 232 each contribute to the substrate site. NAD(+) is bound by residues asparagine 233, 262–267 (GYGDVG), glutamate 285, asparagine 320, 341–343 (IGH), and asparagine 386.

Belongs to the adenosylhomocysteinase family. NAD(+) serves as cofactor.

The protein resides in the cytoplasm. The catalysed reaction is S-adenosyl-L-homocysteine + H2O = L-homocysteine + adenosine. It functions in the pathway amino-acid biosynthesis; L-homocysteine biosynthesis; L-homocysteine from S-adenosyl-L-homocysteine: step 1/1. In terms of biological role, may play a key role in the regulation of the intracellular concentration of adenosylhomocysteine. The sequence is that of Adenosylhomocysteinase from Methylococcus capsulatus (strain ATCC 33009 / NCIMB 11132 / Bath).